The primary structure comprises 148 residues: Deoxyuridine 5'-triphosphate nucleotidohydrolase (148 aa).

Substrate-binding positions include 68 to 70 (RSG), Asn81, 85 to 87 (TID), and Lys95.

Belongs to the dUTPase family. Requires Mg(2+) as cofactor.

It carries out the reaction dUTP + H2O = dUMP + diphosphate + H(+). The protein operates within pyrimidine metabolism; dUMP biosynthesis; dUMP from dCTP (dUTP route): step 2/2. In terms of biological role, this enzyme is involved in nucleotide metabolism: it produces dUMP, the immediate precursor of thymidine nucleotides and it decreases the intracellular concentration of dUTP so that uracil cannot be incorporated into DNA. This Rickettsia typhi (strain ATCC VR-144 / Wilmington) protein is Deoxyuridine 5'-triphosphate nucleotidohydrolase.